The following is a 211-amino-acid chain: Protein FAM167A (211 aa).

2 disordered regions span residues 1-30 (MSVP…DHLR) and 56-108 (EEQT…GKLE). Residues 120-153 (LRKELMEMRLQDQQLARQLMRLRSDIHKLKIEQT) are a coiled coil.

It belongs to the FAM167 (SEC) family.

This is Protein FAM167A (FAM167A) from Bos taurus (Bovine).